A 1179-amino-acid polypeptide reads, in one-letter code: Protein turtle homolog A (1179 aa).

The first 20 residues, 1 to 20, serve as a signal peptide directing secretion; it reads MIWCLRLTVLSLIISQGADG. The Extracellular portion of the chain corresponds to 21-734; that stretch reads RRKPEVVSVV…TQLPGLLPQP (714 aa). Ig-like domains follow at residues 24-124, 136-216, 226-318, 322-410, and 418-502; these read PEVV…DFAN, PQFQ…GSIT, PPVI…AYLT, PAQV…SPVT, and PAFI…TNVY. 2 cysteine pairs are disulfide-bonded: Cys41–Cys108 and Cys158–Cys206. Residues Asn188, Asn239, and Asn256 are each glycosylated (N-linked (GlcNAc...) asparagine). 3 disulfide bridges follow: Cys248–Cys301, Cys344–Cys395, and Cys440–Cys486. Fibronectin type-III domains are found at residues 507–611 and 623–718; these read SPHV…TTPA and PLSP…TSGL. N-linked (GlcNAc...) asparagine glycans are attached at residues Asn513 and Asn524. The helical transmembrane segment at 735 to 755 threads the bilayer; sequence VLAGVVGGVCFLGVAVLVSIL. Residues 756 to 1179 are Cytoplasmic-facing; that stretch reads AACLMNRRRA…ISYPEQATLL (424 aa). Residues 767-807 are disordered; the sequence is RRHRKRLRQDPPLIFSPRGKSGSHSAPGSGSPDSVTKFKLQ. Residues 785 to 800 show a composition bias toward low complexity; the sequence is GKSGSHSAPGSGSPDS. Phosphoserine is present on Ser809. 3 disordered regions span residues 819–842, 942–974, and 1016–1079; these read LWGE…PLPL, PPLE…DSPP, and APRG…KRRN. Over residues 944–954 the composition is skewed to pro residues; sequence LEEPTPAPPPD. Polar residues predominate over residues 1020 to 1029; that stretch reads SLTSQSSGRG. The PDZ-binding signature appears at 1177 to 1179; the sequence is TLL.

The protein belongs to the immunoglobulin superfamily. Turtle family. As to quaternary structure, interacts with MAGI2 and SHANK1. In terms of tissue distribution, expressed in both cell bodies and dendrites of cortical and hippocampal neurons and also cerebellar Purkinje cells (at protein level).

It localises to the cell membrane. Its subcellular location is the synapse. Its function is as follows. Functions in dendrite outgrowth and synapse maturation. This is Protein turtle homolog A (Igsf9) from Mus musculus (Mouse).